We begin with the raw amino-acid sequence, 1057 residues long: Carbamoyl phosphate synthase large chain (1057 aa).

Residues 1-401 (MPKREDINKI…ATQKAIRSLD (401 aa)) form a carboxyphosphate synthetic domain region. Positions 129, 169, 175, 176, 208, 210, 215, 241, 242, 243, 284, and 298 each coordinate ATP. Positions 133–327 (RALMNDLNEP…IAKVAAKIAV (195 aa)) constitute an ATP-grasp 1 domain. Mg(2+) is bound by residues glutamine 284, glutamate 298, and asparagine 300. Residues glutamine 284, glutamate 298, and asparagine 300 each coordinate Mn(2+). Residues 402–546 (IDINYIGDEE…YSTYELENES (145 aa)) form an oligomerization domain region. Residues 547–929 (IVSNRKSIVV…ALYKAFEGAK (383 aa)) form a carbamoyl phosphate synthetic domain region. The region spanning 671–861 (NKLIQANGIR…MARLATRAIL (191 aa)) is the ATP-grasp 2 domain. Residues arginine 707, glutamine 746, leucine 748, glutamate 752, glycine 777, valine 778, histidine 779, serine 780, glutamine 820, and glutamate 832 each contribute to the ATP site. The Mg(2+) site is built by glutamine 820, glutamate 832, and asparagine 834. Mn(2+)-binding residues include glutamine 820, glutamate 832, and asparagine 834. Residues 930–1057 (MHMPDHGKVL…ESQAFTTLHL (128 aa)) form the MGS-like domain. The segment at 930-1057 (MHMPDHGKVL…ESQAFTTLHL (128 aa)) is allosteric domain.

The protein belongs to the CarB family. As to quaternary structure, composed of two chains; the small (or glutamine) chain promotes the hydrolysis of glutamine to ammonia, which is used by the large (or ammonia) chain to synthesize carbamoyl phosphate. Tetramer of heterodimers (alpha,beta)4. The cofactor is Mg(2+). Mn(2+) serves as cofactor.

It catalyses the reaction hydrogencarbonate + L-glutamine + 2 ATP + H2O = carbamoyl phosphate + L-glutamate + 2 ADP + phosphate + 2 H(+). It carries out the reaction hydrogencarbonate + NH4(+) + 2 ATP = carbamoyl phosphate + 2 ADP + phosphate + 2 H(+). It participates in amino-acid biosynthesis; L-arginine biosynthesis; carbamoyl phosphate from bicarbonate: step 1/1. Its pathway is pyrimidine metabolism; UMP biosynthesis via de novo pathway; (S)-dihydroorotate from bicarbonate: step 1/3. Its function is as follows. Large subunit of the glutamine-dependent carbamoyl phosphate synthetase (CPSase). CPSase catalyzes the formation of carbamoyl phosphate from the ammonia moiety of glutamine, carbonate, and phosphate donated by ATP, constituting the first step of 2 biosynthetic pathways, one leading to arginine and/or urea and the other to pyrimidine nucleotides. The large subunit (synthetase) binds the substrates ammonia (free or transferred from glutamine from the small subunit), hydrogencarbonate and ATP and carries out an ATP-coupled ligase reaction, activating hydrogencarbonate by forming carboxy phosphate which reacts with ammonia to form carbamoyl phosphate. In Pediococcus pentosaceus (strain ATCC 25745 / CCUG 21536 / LMG 10740 / 183-1w), this protein is Carbamoyl phosphate synthase large chain.